A 584-amino-acid polypeptide reads, in one-letter code: 2-succinyl-5-enolpyruvyl-6-hydroxy-3-cyclohexene-1-carboxylate synthase (584 aa).

It belongs to the TPP enzyme family. MenD subfamily. Homodimer. The cofactor is Mg(2+). Mn(2+) is required as a cofactor. Thiamine diphosphate serves as cofactor.

The catalysed reaction is isochorismate + 2-oxoglutarate + H(+) = 5-enolpyruvoyl-6-hydroxy-2-succinyl-cyclohex-3-ene-1-carboxylate + CO2. The protein operates within quinol/quinone metabolism; 1,4-dihydroxy-2-naphthoate biosynthesis; 1,4-dihydroxy-2-naphthoate from chorismate: step 2/7. Its pathway is quinol/quinone metabolism; menaquinone biosynthesis. Catalyzes the thiamine diphosphate-dependent decarboxylation of 2-oxoglutarate and the subsequent addition of the resulting succinic semialdehyde-thiamine pyrophosphate anion to isochorismate to yield 2-succinyl-5-enolpyruvyl-6-hydroxy-3-cyclohexene-1-carboxylate (SEPHCHC). The polypeptide is 2-succinyl-5-enolpyruvyl-6-hydroxy-3-cyclohexene-1-carboxylate synthase (Bacillus cereus (strain ATCC 10987 / NRS 248)).